The following is a 93-amino-acid chain: Mitochondrial import inner membrane translocase subunit tim10 (93 aa).

Residues 38-63 (CQKKCIPNDYREGDLNKGESVCLDRC) carry the Twin CX3C motif motif. 2 cysteine pairs are disulfide-bonded: C38-C63 and C42-C59.

The protein belongs to the small Tim family. In terms of assembly, heterohexamer; composed of 3 copies of TIM9 and 3 copies of TIM10, named soluble 70 kDa complex. Associates directly with the TIM22 complex, whose core is composed of TIM22 and TIM54. Interacts with the transmembrane regions of multi-pass transmembrane proteins in transit.

It is found in the mitochondrion inner membrane. Mitochondrial intermembrane chaperone that participates in the import and insertion of multi-pass transmembrane proteins into the mitochondrial inner membrane. Also required for the transfer of beta-barrel precursors from the TOM complex to the sorting and assembly machinery (SAM complex) of the outer membrane. Acts as a chaperone-like protein that protects the hydrophobic precursors from aggregation and guide them through the mitochondrial intermembrane space. The polypeptide is Mitochondrial import inner membrane translocase subunit tim10 (tim10) (Aspergillus fumigatus (strain ATCC MYA-4609 / CBS 101355 / FGSC A1100 / Af293) (Neosartorya fumigata)).